A 296-amino-acid polypeptide reads, in one-letter code: Mycothiol acetyltransferase (296 aa).

N-acetyltransferase domains are found at residues 8 to 146 (RSPE…PPVE) and 151 to 296 (ISVR…GPPV). 1D-myo-inositol 2-(L-cysteinylamino)-2-deoxy-alpha-D-glucopyranoside is bound at residue E39. Residue 76–78 (VVT) participates in acetyl-CoA binding. 1D-myo-inositol 2-(L-cysteinylamino)-2-deoxy-alpha-D-glucopyranoside-binding residues include E178, K220, and E228. Acetyl-CoA contacts are provided by residues 232–234 (VGV) and 239–245 (QGEGLGR). Y266 lines the 1D-myo-inositol 2-(L-cysteinylamino)-2-deoxy-alpha-D-glucopyranoside pocket.

It belongs to the acetyltransferase family. MshD subfamily. As to quaternary structure, monomer.

The enzyme catalyses 1D-myo-inositol 2-(L-cysteinylamino)-2-deoxy-alpha-D-glucopyranoside + acetyl-CoA = mycothiol + CoA + H(+). Functionally, catalyzes the transfer of acetyl from acetyl-CoA to desacetylmycothiol (Cys-GlcN-Ins) to form mycothiol. The sequence is that of Mycothiol acetyltransferase from Kytococcus sedentarius (strain ATCC 14392 / DSM 20547 / JCM 11482 / CCUG 33030 / NBRC 15357 / NCTC 11040 / CCM 314 / 541) (Micrococcus sedentarius).